A 447-amino-acid polypeptide reads, in one-letter code: tRNA-2-methylthio-N(6)-dimethylallyladenosine synthase (447 aa).

An MTTase N-terminal domain is found at 4–120 (RSFFIKTYGC…INELLERSRT (117 aa)). 6 residues coordinate [4Fe-4S] cluster: C13, C49, C83, C161, C165, and C168. The Radical SAM core domain maps to 147–382 (HEGEFRKFVT…QARQDEIGLE (236 aa)). The 62-residue stretch at 385-446 (QEYIGTTQEV…QHSLRGSIVE (62 aa)) folds into the TRAM domain.

It belongs to the methylthiotransferase family. MiaB subfamily. As to quaternary structure, monomer. [4Fe-4S] cluster is required as a cofactor.

It is found in the cytoplasm. It catalyses the reaction N(6)-dimethylallyladenosine(37) in tRNA + (sulfur carrier)-SH + AH2 + 2 S-adenosyl-L-methionine = 2-methylsulfanyl-N(6)-dimethylallyladenosine(37) in tRNA + (sulfur carrier)-H + 5'-deoxyadenosine + L-methionine + A + S-adenosyl-L-homocysteine + 2 H(+). Functionally, catalyzes the methylthiolation of N6-(dimethylallyl)adenosine (i(6)A), leading to the formation of 2-methylthio-N6-(dimethylallyl)adenosine (ms(2)i(6)A) at position 37 in tRNAs that read codons beginning with uridine. The protein is tRNA-2-methylthio-N(6)-dimethylallyladenosine synthase of Desulfotalea psychrophila (strain LSv54 / DSM 12343).